We begin with the raw amino-acid sequence, 372 residues long: tRNA pseudouridine synthase D (372 aa).

Asp85 (nucleophile) is an active-site residue. The TRUD domain occupies 160 to 330 (GFTNYFGYQR…MQGSRRFMWG (171 aa)).

This sequence belongs to the pseudouridine synthase TruD family.

It carries out the reaction uridine(13) in tRNA = pseudouridine(13) in tRNA. In terms of biological role, responsible for synthesis of pseudouridine from uracil-13 in transfer RNAs. The chain is tRNA pseudouridine synthase D from Campylobacter jejuni (strain RM1221).